A 735-amino-acid chain; its full sequence is ATP-dependent RNA helicase dbp4 (735 aa).

The disordered stretch occupies residues 1–24 (MPKNRTGRSREAREKKRKEEEEEI). A compositionally biased stretch (basic and acidic residues) spans 8 to 19 (RSREAREKKRKE). Positions 39 to 67 (DHFAELPLTQPTKSALKNAHFITLTEIQK) match the Q motif motif. Positions 70–244 (IPSALKGRDI…RLSLQNPDFI (175 aa)) constitute a Helicase ATP-binding domain. 83–90 (AKTGSGKT) serves as a coordination point for ATP. The DEAD box motif lies at 192–195 (DEAD). Residues 270–424 (KLDILFGFIR…GKKTSIRNQL (155 aa)) form the Helicase C-terminal domain. Residues 483 to 513 (GKLKNHSQSQKDYNSSTSLDSSEESEVDVEN) are disordered. A phosphoserine mark is found at Ser500, Ser503, Ser504, and Ser545. The tract at residues 652 to 712 (KQLEKKRRRQ…DNDERDHGGI (61 aa)) is disordered. Residues 692-711 (ETSKKQKKWFEDNDERDHGG) show a composition bias toward basic and acidic residues.

The protein belongs to the DEAD box helicase family. DDX10/DBP4 subfamily. Interacts with the U3 and U14 snoRNAs. Associates with pre-ribosomal complexes.

The protein localises to the nucleus. Its subcellular location is the nucleolus. The catalysed reaction is ATP + H2O = ADP + phosphate + H(+). ATP-dependent RNA helicase required for ribosome biogenesis. Involved in the release of U14 snoRNA in pre-ribosomal complexes. Required for pre-rRNA cleavage at site A2. This is ATP-dependent RNA helicase dbp4 (dbp4) from Schizosaccharomyces pombe (strain 972 / ATCC 24843) (Fission yeast).